A 952-amino-acid chain; its full sequence is UvrABC system protein A (952 aa).

38–45 (GLSGSGKS) lines the ATP pocket. A C4-type zinc finger spans residues 258–285 (CNECGFSIPELEPRFFSFNSPVGACKSC). ABC transporter domains are found at residues 315-596 (FRSV…KKSI) and 616-945 (GNGK…LFLE). An ATP-binding site is contributed by 648-655 (GVSGSGKS). A C4-type zinc finger spans residues 747-773 (CENCSGDGLIKIEMHFLPDVFVKCESC).

The protein belongs to the ABC transporter superfamily. UvrA family. As to quaternary structure, forms a heterotetramer with UvrB during the search for lesions.

The protein resides in the cytoplasm. Functionally, the UvrABC repair system catalyzes the recognition and processing of DNA lesions. UvrA is an ATPase and a DNA-binding protein. A damage recognition complex composed of 2 UvrA and 2 UvrB subunits scans DNA for abnormalities. When the presence of a lesion has been verified by UvrB, the UvrA molecules dissociate. The chain is UvrABC system protein A from Malacoplasma penetrans (strain HF-2) (Mycoplasma penetrans).